The chain runs to 65 residues: Large ribosomal subunit protein uL29 (65 aa).

The protein belongs to the universal ribosomal protein uL29 family.

The chain is Large ribosomal subunit protein uL29 from Dehalococcoides mccartyi (strain ATCC BAA-2100 / JCM 16839 / KCTC 5957 / BAV1).